Here is a 157-residue protein sequence, read N- to C-terminus: MHCPFCSATDTKVIDSRLVADGHQVRRRRECLLCHERFTTFEGAELVMPRVVKQDGSRQPFDEDKLRGGMLRAVEKRPVSMDEIEQALSKIKSTLRATGEREVTSKMIGNLMMDHLVNLDKVAYIRFASVYRAFEDVSEFGEAIAKLQNDKSKSGKS.

A zinc finger lies at 3-34 (CPFCSATDTKVIDSRLVADGHQVRRRRECLLC). In terms of domain architecture, ATP-cone spans 49-139 (PRVVKQDGSR…VYRAFEDVSE (91 aa)).

This sequence belongs to the NrdR family. Zn(2+) is required as a cofactor.

Its function is as follows. Negatively regulates transcription of bacterial ribonucleotide reductase nrd genes and operons by binding to NrdR-boxes. In Shewanella loihica (strain ATCC BAA-1088 / PV-4), this protein is Transcriptional repressor NrdR.